The chain runs to 177 residues: Anditomin synthesis protein L (177 aa).

Helical transmembrane passes span 54 to 74 and 117 to 137; these read VVNS…PFIM and IVNF…YMVF. The N-linked (GlcNAc...) asparagine glycan is linked to asparagine 165.

Its subcellular location is the membrane. It functions in the pathway secondary metabolite biosynthesis; terpenoid biosynthesis. In terms of biological role, part of the gene cluster that mediates the biosynthesis of anditomin, a fungal meroterpenoid. The first step of the pathway is the synthesis of 3,5-dimethylorsellinic acid (DMOA) by the polyketide synthase andM. DMOA is then converted to the phthalide compound 5,7-dihydroxy-4,6-dimethylphthalide (DHDMP) by the cytochrome P450 monooxygenase andK, which is further prenylated by the prenyltransferase andD to yield farnesyl-DHDMP. Further epoxidation by the FAD-dependent monooxygenase andE leads to epoxyfarnesyl-DHDMP. The next step involves the terpene cyclase andB that converts epoxyfarnesyl-DHDMP into preandiloid A through opening of the epoxide ring followed by the cyclization of the farnesyl moiety. Preandiloid A is in turn oxidized at the C-3 hydroxyl group to yield preandiloid B by the dehydrogenase andC. The dioxygenase andA is solely responsible for the dehydrogenation of preandiloid B leading to the enone preandiloid C, as well as for the intriguing structural rearrangement to generate the bicyclo[2.2.2]octane core, transforming preandiloid C into andiconin. FAD-binding monooxygenase andJ then produces andilesin D which is reduced by dehydrogenase andI to yield andilesin A. Action of acetyltransferase andG followed by a spontaneous acetate elimination leads then to andilesin B, which is in turn substrate of the short chain dehydrogenase andH to yield andilesin C. Finally, the dioxygenase andF catalyzes the transformation of andilesin C to anditomin. The exact role of andL within the anditomin biosynthetic pathway has not been identified yet. In Emericella variicolor (Aspergillus stellatus), this protein is Anditomin synthesis protein L.